The sequence spans 170 residues: NADH-quinone oxidoreductase subunit B (170 aa).

Positions 37, 38, 102, and 131 each coordinate [4Fe-4S] cluster.

The protein belongs to the complex I 20 kDa subunit family. As to quaternary structure, NDH-1 is composed of 14 different subunits. Subunits NuoB, C, D, E, F, and G constitute the peripheral sector of the complex. [4Fe-4S] cluster is required as a cofactor.

It is found in the cell inner membrane. The enzyme catalyses a quinone + NADH + 5 H(+)(in) = a quinol + NAD(+) + 4 H(+)(out). NDH-1 shuttles electrons from NADH, via FMN and iron-sulfur (Fe-S) centers, to quinones in the respiratory chain. The immediate electron acceptor for the enzyme in this species is believed to be ubiquinone. Couples the redox reaction to proton translocation (for every two electrons transferred, four hydrogen ions are translocated across the cytoplasmic membrane), and thus conserves the redox energy in a proton gradient. The polypeptide is NADH-quinone oxidoreductase subunit B (Geobacter sulfurreducens (strain ATCC 51573 / DSM 12127 / PCA)).